The sequence spans 199 residues: Acireductone dioxygenase 2 (199 aa).

Residues His-98, His-100, Glu-104, and His-143 each coordinate Fe(2+). Residues His-98, His-100, Glu-104, and His-143 each coordinate Ni(2+).

This sequence belongs to the acireductone dioxygenase (ARD) family. Fe(2+) serves as cofactor. The cofactor is Ni(2+).

The protein resides in the cytoplasm. It localises to the nucleus. The enzyme catalyses 1,2-dihydroxy-5-(methylsulfanyl)pent-1-en-3-one + O2 = 4-methylsulfanyl-2-oxobutanoate + formate + 2 H(+). It catalyses the reaction 1,2-dihydroxy-5-(methylsulfanyl)pent-1-en-3-one + O2 = 3-(methylsulfanyl)propanoate + CO + formate + 2 H(+). The protein operates within amino-acid biosynthesis; L-methionine biosynthesis via salvage pathway; L-methionine from S-methyl-5-thio-alpha-D-ribose 1-phosphate: step 5/6. Its function is as follows. Catalyzes 2 different reactions between oxygen and the acireductone 1,2-dihydroxy-3-keto-5-methylthiopentene (DHK-MTPene) depending upon the metal bound in the active site. Fe-containing acireductone dioxygenase (Fe-ARD) produces formate and 2-keto-4-methylthiobutyrate (KMTB), the alpha-ketoacid precursor of methionine in the methionine recycle pathway. Ni-containing acireductone dioxygenase (Ni-ARD) produces methylthiopropionate, carbon monoxide and formate, and does not lie on the methionine recycle pathway. This chain is Acireductone dioxygenase 2, found in Vitis vinifera (Grape).